Reading from the N-terminus, the 688-residue chain is Translation initiation factor IF-2 (688 aa).

Composition is skewed to basic and acidic residues over residues 53–62 (GKEKSEKTKE) and 86–95 (KRDDKNEKVN). Residues 53-100 (GKEKSEKTKEEDDEIETTAKNPIKESMNNKKSNKRDDKNEKVNTENAE) are disordered. Residues 187–354 (KRSPIITVMG…MILLSSEILE (168 aa)) enclose the tr-type G domain. Residues 196 to 203 (GHVDHGKT) form a G1 region. 196–203 (GHVDHGKT) provides a ligand contact to GTP. Positions 221–225 (GITQH) are G2. Positions 242–245 (DTPG) are G3. GTP is bound by residues 242–246 (DTPGH) and 296–299 (NKID). Residues 296–299 (NKID) form a G4 region. The interval 332-334 (SAH) is G5.

It belongs to the TRAFAC class translation factor GTPase superfamily. Classic translation factor GTPase family. IF-2 subfamily.

The protein resides in the cytoplasm. In terms of biological role, one of the essential components for the initiation of protein synthesis. Protects formylmethionyl-tRNA from spontaneous hydrolysis and promotes its binding to the 30S ribosomal subunits. Also involved in the hydrolysis of GTP during the formation of the 70S ribosomal complex. This is Translation initiation factor IF-2 from Clostridium botulinum (strain Kyoto / Type A2).